We begin with the raw amino-acid sequence, 158 residues long: UPF0336 protein Mb0654 (158 aa).

The protein belongs to the UPF0336 family.

The protein is UPF0336 protein Mb0654 of Mycobacterium bovis (strain ATCC BAA-935 / AF2122/97).